The sequence spans 819 residues: DNA topoisomerase 4 subunit A (819 aa).

The Topo IIA-type catalytic domain occupies 30-496 (LPDIRDGLKP…QIIEIDTASL (467 aa)). Tyr118 serves as the catalytic O-(5'-phospho-DNA)-tyrosine intermediate.

The protein belongs to the type II topoisomerase GyrA/ParC subunit family. ParC type 2 subfamily. In terms of assembly, heterotetramer composed of ParC and ParE.

The protein localises to the cell membrane. The enzyme catalyses ATP-dependent breakage, passage and rejoining of double-stranded DNA.. Topoisomerase IV is essential for chromosome segregation. It relaxes supercoiled DNA. Performs the decatenation events required during the replication of a circular DNA molecule. The sequence is that of DNA topoisomerase 4 subunit A from Streptococcus pyogenes serotype M6 (strain ATCC BAA-946 / MGAS10394).